The sequence spans 179 residues: MARLNELYNKEMVPQLMKDFNYRNVMEVPKLEKIVVNMGLGEAIQNVKILDSAVDEMAVITGQKPIITKAKKSIAGFKLRQGMPIGCAVTLRKDKMYEFLDRLVNVSLPRVRDFKGISGKAFDGNGNYSLGVKEQLIFPEINYDKIDKIKGLNITIVTTAKSDEEGKALLKLFGMPFRN.

Belongs to the universal ribosomal protein uL5 family. In terms of assembly, part of the 50S ribosomal subunit; part of the 5S rRNA/L5/L18/L25 subcomplex. Contacts the 5S rRNA and the P site tRNA. Forms a bridge to the 30S subunit in the 70S ribosome.

Functionally, this is one of the proteins that bind and probably mediate the attachment of the 5S RNA into the large ribosomal subunit, where it forms part of the central protuberance. In the 70S ribosome it contacts protein S13 of the 30S subunit (bridge B1b), connecting the 2 subunits; this bridge is implicated in subunit movement. Contacts the P site tRNA; the 5S rRNA and some of its associated proteins might help stabilize positioning of ribosome-bound tRNAs. This Geotalea uraniireducens (strain Rf4) (Geobacter uraniireducens) protein is Large ribosomal subunit protein uL5.